Here is a 121-residue protein sequence, read N- to C-terminus: Small ribosomal subunit protein uS13 (121 aa).

Residues 93-121 (RGLPVRGQNTKNNARTRKGKATAIAGKKK) are disordered. Basic residues predominate over residues 106–121 (ARTRKGKATAIAGKKK).

This sequence belongs to the universal ribosomal protein uS13 family. In terms of assembly, part of the 30S ribosomal subunit. Forms a loose heterodimer with protein S19. Forms two bridges to the 50S subunit in the 70S ribosome.

Located at the top of the head of the 30S subunit, it contacts several helices of the 16S rRNA. In the 70S ribosome it contacts the 23S rRNA (bridge B1a) and protein L5 of the 50S subunit (bridge B1b), connecting the 2 subunits; these bridges are implicated in subunit movement. Contacts the tRNAs in the A and P-sites. The sequence is that of Small ribosomal subunit protein uS13 from Streptococcus uberis (strain ATCC BAA-854 / 0140J).